The sequence spans 265 residues: Indole-3-glycerol phosphate synthase (265 aa).

Belongs to the TrpC family.

The enzyme catalyses 1-(2-carboxyphenylamino)-1-deoxy-D-ribulose 5-phosphate + H(+) = (1S,2R)-1-C-(indol-3-yl)glycerol 3-phosphate + CO2 + H2O. It functions in the pathway amino-acid biosynthesis; L-tryptophan biosynthesis; L-tryptophan from chorismate: step 4/5. This chain is Indole-3-glycerol phosphate synthase, found in Xanthomonas euvesicatoria pv. vesicatoria (strain 85-10) (Xanthomonas campestris pv. vesicatoria).